Here is a 248-residue protein sequence, read N- to C-terminus: DNA repair protein RecO (248 aa).

It belongs to the RecO family.

Involved in DNA repair and RecF pathway recombination. This is DNA repair protein RecO from Bradyrhizobium sp. (strain ORS 278).